Consider the following 73-residue polypeptide: Protein SlyX homolog (73 aa).

This sequence belongs to the SlyX family.

The polypeptide is Protein SlyX homolog (Actinobacillus pleuropneumoniae serotype 5b (strain L20)).